The sequence spans 182 residues: MQTEHVILLNAQGVPTGTLEKYAAHTADTLLHLAFSSWLFNAKGQLLVTRRALSKKAWPGVWTNSVCGHPQLGESNEDAVIRRCRYELGVEITPPESIYPDFRYRATDPNGIVENEVCPVFAARTTSALQINDDEVMDYQWCDLADVLHGIDATPWAFSPWMVMQAANSEARKLLSAFAQHN.

Residues H25 and H32 each contribute to the Mn(2+) site. The Nudix hydrolase domain maps to 30 to 164; sequence LLHLAFSSWL…PWAFSPWMVM (135 aa). Residue C67 is part of the active site. H69 is a Mn(2+) binding site. Position 87 (E87) interacts with Mg(2+). Positions 114 and 116 each coordinate Mn(2+). The active site involves E116.

It belongs to the IPP isomerase type 1 family. As to quaternary structure, homodimer. Mg(2+) serves as cofactor. Requires Mn(2+) as cofactor.

It localises to the cytoplasm. The enzyme catalyses isopentenyl diphosphate = dimethylallyl diphosphate. It functions in the pathway isoprenoid biosynthesis; dimethylallyl diphosphate biosynthesis; dimethylallyl diphosphate from isopentenyl diphosphate: step 1/1. In terms of biological role, catalyzes the 1,3-allylic rearrangement of the homoallylic substrate isopentenyl (IPP) to its highly electrophilic allylic isomer, dimethylallyl diphosphate (DMAPP). In Escherichia coli (strain SMS-3-5 / SECEC), this protein is Isopentenyl-diphosphate Delta-isomerase.